We begin with the raw amino-acid sequence, 726 residues long: Kinesin-like protein KIN-10B (726 aa).

Disordered regions lie at residues 1 to 20 (MEQQ…RVVA), 60 to 82 (AATA…QQQK), and 402 to 423 (KNAR…TANR). The Kinesin motor domain maps to 15-359 (GVRVVARICP…LALASRSSQV (345 aa)). The span at 408–423 (FNNSGVKGGQTPTANR) shows a compositional bias: polar residues.

The protein belongs to the TRAFAC class myosin-kinesin ATPase superfamily. Kinesin family. KIN-10 subfamily.

In Oryza sativa subsp. japonica (Rice), this protein is Kinesin-like protein KIN-10B.